A 366-amino-acid polypeptide reads, in one-letter code: Phenylalanine--tRNA ligase alpha subunit (366 aa).

Mg(2+) is bound at residue Glu-259.

This sequence belongs to the class-II aminoacyl-tRNA synthetase family. Phe-tRNA synthetase alpha subunit type 1 subfamily. As to quaternary structure, tetramer of two alpha and two beta subunits. Requires Mg(2+) as cofactor.

The protein resides in the cytoplasm. It carries out the reaction tRNA(Phe) + L-phenylalanine + ATP = L-phenylalanyl-tRNA(Phe) + AMP + diphosphate + H(+). This chain is Phenylalanine--tRNA ligase alpha subunit, found in Novosphingobium aromaticivorans (strain ATCC 700278 / DSM 12444 / CCUG 56034 / CIP 105152 / NBRC 16084 / F199).